The chain runs to 525 residues: Ankyrin repeat domain-containing protein SOWAHC (525 aa).

Residues 84 to 263 form a disordered region; the sequence is CEGPSEPSGD…EESSGGGSVT (180 aa). Serine 88 bears the Phosphoserine mark. Positions 101–112 are enriched in low complexity; the sequence is AEPEAPDGPAGP. Serine 126, serine 213, and serine 226 each carry phosphoserine. Residues 230 to 241 are compositionally biased toward gly residues; it reads SSGGGRGRGGGD. A compositionally biased stretch (low complexity) spans 242 to 251; the sequence is SDSASVASSS. ANK repeat units follow at residues 301 to 330 and 340 to 370; these read TGFTCLHWAAKHGRQELLAMLVNFANKHQL and GGYTALHLAAMHGHVEVVKLLVGAYDADVDI. The segment at 434–525 is disordered; that stretch reads DGGDHHHHHH…TLRPKSNVFG (92 aa). Over residues 468–477 the composition is skewed to basic residues; it reads IKPRLNKIRF. The segment covering 489–509 has biased composition (basic and acidic residues); sequence RDPEQPLEGRGEEGVGEERPV.

It belongs to the SOWAH family.

The polypeptide is Ankyrin repeat domain-containing protein SOWAHC (SOWAHC) (Homo sapiens (Human)).